Here is a 640-residue protein sequence, read N- to C-terminus: MGKIIGIDLGTTNSCVSILEGGAPKVIENAEGDRTTPSIIAFTNDGEILVGQSAKRQAVTNPHNTLFAVKRLIGRKFKDDVVQKDISMVPYKIVAADNGDAWVEVKGEKKAPPQISAEVLKKMKKTAEDYLGEKVTEAVITVPAYFNDSQRQATKDAGKIAGLDVKRIINEPTAAALAYGLDKGKGDHTIAVYDLGGGTFDISIIEIADVDGEHQFEVLSTNGDTFLGGEDFDMRLIEFLADSFKKDTGIDLHNDPLALQRLKEAAEKAKIELSSSQQTEVNLPYITADATGPKHLVVKLTRAKLESLVEDLVNKSLEPVKQAIKDSGKSISDIDDVILVGGQTRMPLVQKAVADYFGKEPRKDVNPDEAVAIGAAIQGAVLAGDVKDVLLLDVTPLTLGIETMGGVATPLIEKNTTIPTKKSQVFSTADDNQTAVTIHVVQGERKQASQNKSLGRFDLADIPPAPRGMPQIEVTFDIDANGILNVSAKDKATGKEQSIVIKASSGLSDDEIQKMVKDAEANAEADRKFAELVGARNTLEGLIHATQKTVKEAGDKATADEKAAIDAAVKEAEEAVKGDDLARIEAATTKLTEASSSLAQKLYAEQQAAGAGAQQADGTGKAADDGVVDAEFEEVKEDNK.

Residue threonine 199 is modified to Phosphothreonine; by autocatalysis. The span at 606–621 (QQAAGAGAQQADGTGK) shows a compositional bias: low complexity. The segment at 606 to 640 (QQAAGAGAQQADGTGKAADDGVVDAEFEEVKEDNK) is disordered. Positions 626–640 (GVVDAEFEEVKEDNK) are enriched in acidic residues.

Belongs to the heat shock protein 70 family.

Its function is as follows. Acts as a chaperone. The protein is Chaperone protein DnaK of Cellvibrio japonicus (strain Ueda107) (Pseudomonas fluorescens subsp. cellulosa).